The primary structure comprises 193 residues: MLGVVELLLLGAAWLAGPARGQNETEPIVLEGKCLVVCDSNPTSDPTGTALGISVRSGSAKVAFSAIRSTNHEPSEMSNRTMIIYFDQVLVNIGNNFDSERSTFIAPRKGIYSFNFHVVKVYNRQTIQVSLMLNGWPVISAFAGDQDVTREAASNGVLIQMEKGDRAYLKLERGNLMGGWKYSTFSGFLVFPL.

The N-terminal stretch at 1–21 (MLGVVELLLLGAAWLAGPARG) is a signal peptide. The N-linked (GlcNAc...) asparagine glycan is linked to N23. The interval 34–38 (CLVVC) is essential for interaction with NRXN1 and linker of two C1q trimers into disulfide-linked hexamers. One can recognise a C1q domain in the interval 57–193 (SGSAKVAFSA…TFSGFLVFPL (137 aa)). Residues 62–193 (VAFSAIRSTN…TFSGFLVFPL (132 aa)) form a necessary for interaction with CBLN3, and homotrimerization region. The N-linked (GlcNAc...) asparagine glycan is linked to N79. An essential for interaction with GRID2 region spans residues 122–147 (YNRQTIQVSLMLNGWPVISAFAGDQD).

Homohexamer; disulfide-linked homotrimers. The trimers are assembled via the globular C1q domains. The trimers associate via N-terminal cysteine residues to form disulfide-linked hexamers. May form oligomers with CBLN2, CBLN3 and CBLN4 prior to secretion. Once secreted, does not interact with other CBLN family members. Interacts with GRID1. Interacts with NRXN1 and NRXN2 long (alpha) and short (beta) isoforms produced by alternative promoter usage. Competes with NLGN1 for NRXN1-binding. Weakly interacts with NRXN3 short isoform and not at all with NRXN3 long isoform. Interacts (via C1q domain) with GRID2; GRID2-binding is calcium-independent; CBLN1 hexamers anchor GRID2 N-terminal domain dimers to monomeric NRXN1 isoform beta; promotes synaptogenesis and mediates the D-Serine-dependent long term depression signals and AMPA receptor endocytosis. Post-translationally, the proteolytic processing to yield cerebellin seems to occur either prior to the secretion by presynaptic neurons and subsequent oligomerization or in some other location after release of the mature protein. Sialoglycoprotein.

The protein resides in the secreted. Its subcellular location is the postsynaptic cell membrane. Functionally, required for synapse integrity and synaptic plasticity. During cerebellar synapse formation, essential for the matching and maintenance of pre- and post-synaptic elements at parallel fiber-Purkinje cell synapses, the establishment of the proper pattern of climbing fiber-Purkinje cell innervation, and induction of long-term depression at parallel fiber-Purkinje cell synapses. Plays a role as a synaptic organizer that acts bidirectionally on both pre- and post-synaptic components. On the one hand induces accumulation of synaptic vesicles in the pre-synaptic part by binding with NRXN1 and in other hand induces clustering of GRID2 and its associated proteins at the post-synaptic site through association of GRID2. NRXN1-CBLN1-GRID2 complex directly induces parallel fiber protrusions that encapsulate spines of Purkinje cells leading to accumulation of GRID2 and synaptic vesicles. Required for CBLN3 export from the endoplasmic reticulum and secretion. NRXN1-CBLN1-GRID2 complex mediates the D-Serine-dependent long term depression signals and AMPA receptor endocytosis. Essential for long-term maintenance but not establishment of excitatory synapses. Inhibits the formation and function of inhibitory GABAergic synapses in cerebellar Purkinje cells. Its function is as follows. The cerebellin peptide exerts neuromodulatory functions. Directly stimulates norepinephrine release via the adenylate cyclase/PKA-dependent signaling pathway; and indirectly enhances adrenocortical secretion in vivo, through a paracrine mechanism involving medullary catecholamine release. In Bos taurus (Bovine), this protein is Cerebellin-1.